The chain runs to 126 residues: MSNVPSELKYVASHEWLRLEDDGTVTVGITDHAQEALGDIVYVELPDVGDTVAVDDEVAVVESVKAASDVYAPLTGEVVAINEALEDDPEVINTDPYGEGWMYRIKPDNADDFESLLSAEEYQAEL.

The 83-residue stretch at 24-106 (TVTVGITDHA…YGEGWMYRIK (83 aa)) folds into the Lipoyl-binding domain. Lys-65 carries the post-translational modification N6-lipoyllysine.

It belongs to the GcvH family. In terms of assembly, the glycine cleavage system is composed of four proteins: P, T, L and H. Requires (R)-lipoate as cofactor.

Its function is as follows. The glycine cleavage system catalyzes the degradation of glycine. The H protein shuttles the methylamine group of glycine from the P protein to the T protein. This Psychrobacter sp. (strain PRwf-1) protein is Glycine cleavage system H protein.